The primary structure comprises 256 residues: Ubiquinone/menaquinone biosynthesis C-methyltransferase UbiE (256 aa).

Over residues M1–P12 the composition is skewed to basic and acidic residues. The tract at residues M1–P22 is disordered. S-adenosyl-L-methionine-binding positions include T79, D100, and D128–A129.

It belongs to the class I-like SAM-binding methyltransferase superfamily. MenG/UbiE family.

It carries out the reaction a 2-demethylmenaquinol + S-adenosyl-L-methionine = a menaquinol + S-adenosyl-L-homocysteine + H(+). It catalyses the reaction a 2-methoxy-6-(all-trans-polyprenyl)benzene-1,4-diol + S-adenosyl-L-methionine = a 5-methoxy-2-methyl-3-(all-trans-polyprenyl)benzene-1,4-diol + S-adenosyl-L-homocysteine + H(+). Its pathway is quinol/quinone metabolism; menaquinone biosynthesis; menaquinol from 1,4-dihydroxy-2-naphthoate: step 2/2. The protein operates within cofactor biosynthesis; ubiquinone biosynthesis. Functionally, methyltransferase required for the conversion of demethylmenaquinol (DMKH2) to menaquinol (MKH2) and the conversion of 2-polyprenyl-6-methoxy-1,4-benzoquinol (DDMQH2) to 2-polyprenyl-3-methyl-6-methoxy-1,4-benzoquinol (DMQH2). The protein is Ubiquinone/menaquinone biosynthesis C-methyltransferase UbiE of Pseudomonas putida (Arthrobacter siderocapsulatus).